A 153-amino-acid chain; its full sequence is MIIKILLLIISISLFLNISIGIDENQIWKSCGTPQDIFHINSIVVKPTPPVKGKLVKVNVNGTFIKDVVAGEAKIIAKYNNIMTLYNETNDLCSPTAQAIIGNCPFKKGPTYLHSANFTIPASAPNGYYSGNILLTDNFNNTITCINVAFNLQ.

An N-terminal signal peptide occupies residues 1–21 (MIIKILLLIISISLFLNISIG). N-linked (GlcNAc...) asparagine glycosylation is found at Asn-17, Asn-61, Asn-87, Asn-117, and Asn-140.

It belongs to the NPC2 family. Monomer.

Functionally, catalyzes the intermembrane transfer of phosphatidylglycerol and phosphatidylinositol. This Dictyostelium discoideum (Social amoeba) protein is Putative phosphatidylglycerol/phosphatidylinositol transfer protein DDB_G0285639.